The sequence spans 717 residues: Serologically defined colon cancer antigen 8 homolog (717 aa).

Phosphoserine is present on residues S4 and S28. The tract at residues 84-115 (QTNKENETSPPRRRKLSPSRPSECDDGSMPTM) is disordered. 4 coiled-coil regions span residues 129 to 168 (IHHLEAEVKFCKDELSGMKNRVQVVVLENERLQQELKSQR), 221 to 278 (DANK…LAAS), 352 to 590 (EEAN…SEQY), and 622 to 712 (RSQI…LPSM). The sufficient for homodimerization stretch occupies residues 216 to 717 (TASTGDANKW…QLPSMPQSDC (502 aa)).

In terms of assembly, homodimer. Interacts with OFD1; the interaction is direct. Interacts with FAM161A. Interacts with RABEP2, ERC1 and CEP131. As to expression, expressed in liver, kidney, spleen, brain, heart and muscle. Expressed in photoreceptor cells of the retina.

The protein resides in the cytoplasm. It is found in the cytoskeleton. Its subcellular location is the microtubule organizing center. The protein localises to the centrosome. It localises to the centriole. The protein resides in the cilium basal body. It is found in the cell junction. Plays a role in the establishment of cell polarity and epithelial lumen formation. Also plays an essential role in ciliogenesis and subsequent Hedgehog signaling pathway that requires the presence of intact primary cilia for pathway activation. Mechanistically, interacts with and mediates RABEP2 centrosomal localization which is critical for ciliogenesis. The protein is Serologically defined colon cancer antigen 8 homolog (Sdccag8) of Mus musculus (Mouse).